The following is an 883-amino-acid chain: EEF1AKMT4-ECE2 readthrough transcript protein (883 aa).

Positions 1–160 are methyltransferase-like region; that stretch reads MASPGAGRAP…VHTVDQVLSE (160 aa). Residues 1–178 are Cytoplasmic-facing; the sequence is MASPGAGRAP…QLLGSRTQLE (178 aa). Positions 26 and 30 each coordinate S-adenosyl-L-methionine. Y39 bears the Phosphotyrosine mark. Residues W41, G66, 88–89, 113–114, and K130 contribute to the S-adenosyl-L-methionine site; these read DY and DV. The helical transmembrane segment at 179-199 threads the bilayer; it reads LVLAGASLLLAALLLGCLVAL. Residues 200–883 are Lumenal-facing; the sequence is GVQYHRDPSH…MNPGQLCEVW (684 aa). The 673-residue stretch at 211–883 folds into the Peptidase M13 domain; it reads TCLTEACIRV…MNPGQLCEVW (673 aa). Disulfide bonds link C212/C217, C235/C868, C243/C828, C299/C548, and C757/C880. N279, N283, N324, N384, N429, N496, and N652 each carry an N-linked (GlcNAc...) asparagine glycan. H720 serves as a coordination point for Zn(2+). The active site involves E721. H724 serves as a coordination point for Zn(2+). N-linked (GlcNAc...) asparagine glycosylation is found at N745 and N753. E780 is a Zn(2+) binding site. Residue D784 is the Proton donor of the active site.

In the N-terminal section; belongs to the methyltransferase superfamily. It in the C-terminal section; belongs to the peptidase M13 family. Zn(2+) serves as cofactor.

Its subcellular location is the golgi apparatus membrane. The protein localises to the cytoplasmic vesicle. The protein resides in the secretory vesicle membrane. It carries out the reaction Hydrolysis of the 21-Trp-|-Val-22 bond in big endothelin to form endothelin 1.. With respect to regulation, inhibited by phosphoramidon. Functionally, converts big endothelin-1 to endothelin-1. May also have methyltransferase activity. May play a role in amyloid-beta processing. This Homo sapiens (Human) protein is EEF1AKMT4-ECE2 readthrough transcript protein.